A 505-amino-acid chain; its full sequence is Maturase K (505 aa).

It belongs to the intron maturase 2 family. MatK subfamily.

The protein localises to the plastid. It localises to the chloroplast. Usually encoded in the trnK tRNA gene intron. Probably assists in splicing its own and other chloroplast group II introns. In Idiospermum australiense (Ribbonwood tree), this protein is Maturase K.